The primary structure comprises 448 residues: Tubulin alpha-2 chain (448 aa).

GTP is bound by residues Gln11, Glu69, Ser138, Gly142, Thr143, Thr177, Asn204, and Asn226. Glu69 serves as a coordination point for Mg(2+). The active site involves Glu252. Residues 428 to 448 are disordered; it reads KDYEEVGADSNEGGEEEGEEY. Residues 429–448 are compositionally biased toward acidic residues; the sequence is DYEEVGADSNEGGEEEGEEY.

The protein belongs to the tubulin family. Dimer of alpha and beta chains. A typical microtubule is a hollow water-filled tube with an outer diameter of 25 nm and an inner diameter of 15 nM. Alpha-beta heterodimers associate head-to-tail to form protofilaments running lengthwise along the microtubule wall with the beta-tubulin subunit facing the microtubule plus end conferring a structural polarity. Microtubules usually have 13 protofilaments but different protofilament numbers can be found in some organisms and specialized cells. It depends on Mg(2+) as a cofactor. Post-translationally, undergoes a tyrosination/detyrosination cycle, the cyclic removal and re-addition of a C-terminal tyrosine residue. As to expression, expressed in intestine, pharyngeal muscle cells, and a subset of neurons.

Its subcellular location is the cytoplasm. It localises to the cytoskeleton. It carries out the reaction GTP + H2O = GDP + phosphate + H(+). In terms of biological role, tubulin is the major constituent of microtubules, a cylinder consisting of laterally associated linear protofilaments composed of alpha- and beta-tubulin heterodimers. Microtubules grow by the addition of GTP-tubulin dimers to the microtubule end, where a stabilizing cap forms. Below the cap, tubulin dimers are in GDP-bound state, owing to GTPase activity of alpha-tubulin. Required for the normal dynamic behavior of the non-centrosomal microtubules in the epidermal syncytium. Involved in the redistribution of microtubule end-binding protein EB1/ebp-2 caused by wounding. Required to modulate expression in the epidermis of antimicrobial peptides, such as nlp-29, after wounding, or fungal infection. The protein is Tubulin alpha-2 chain (tba-2) of Caenorhabditis elegans.